Here is a 156-residue protein sequence, read N- to C-terminus: Small ribosomal subunit protein uS7 (156 aa).

The protein belongs to the universal ribosomal protein uS7 family. As to quaternary structure, part of the 30S ribosomal subunit. Contacts proteins S9 and S11.

In terms of biological role, one of the primary rRNA binding proteins, it binds directly to 16S rRNA where it nucleates assembly of the head domain of the 30S subunit. Is located at the subunit interface close to the decoding center, probably blocks exit of the E-site tRNA. This Streptomyces griseus subsp. griseus (strain JCM 4626 / CBS 651.72 / NBRC 13350 / KCC S-0626 / ISP 5235) protein is Small ribosomal subunit protein uS7.